The following is a 460-amino-acid chain: Benzyl alcohol O-benzoyltransferase (460 aa).

Catalysis depends on proton acceptor residues histidine 167 and aspartate 382.

This sequence belongs to the plant acyltransferase family. Specifically expressed in flowers, mainly in the limb of flowers corollas, and, at low levels, in roots, stems, sepals and leaves.

The catalysed reaction is benzyl alcohol + benzoyl-CoA = benzyl benzoate + CoA. The enzyme catalyses benzyl alcohol + acetyl-CoA = benzyl acetate + CoA. It carries out the reaction 3-hydroxybenzyl alcohol + acetyl-CoA = 3-hydroxy-benzyl acetate + CoA. It catalyses the reaction 3-hydroxybenzyl alcohol + benzoyl-CoA = 3-hydroxy-benzyl benzoate + CoA. The catalysed reaction is 2-phenylethanol + benzoyl-CoA = phenethyl benzoate + CoA. The enzyme catalyses (3Z)-hex-3-en-1-ol + benzoyl-CoA = (3Z)-hex-3-en-1-yl benzoate + CoA. It carries out the reaction (2E)-geraniol + acetyl-CoA = (2E)-geranyl acetate + CoA. It catalyses the reaction butan-1-ol + benzoyl-CoA = butyl benzoate + CoA. The catalysed reaction is (2E)-geraniol + benzoyl-CoA = (2E)-geranyl benzoate + CoA. The enzyme catalyses octan-1-ol + benzoyl-CoA = octyl benzoate + CoA. Its pathway is aromatic compound metabolism; benzoyl-CoA degradation. Involved in the production of volatile organic compounds (VOCs), including floral volatile benzenoids and phenylpropanoids (FVBP), in flowers of fragrant cultivars (e.g. cv. Mitchell and cv. V26), scent attracting pollinators (e.g. the night-active hawkmoth pollinator Manduca sexta). Acyltransferase that catalyzes the transfer of benzoyl and acetyl moieties to a large variety of potential substrate alcohols, and involved in the formation of volatile esters benzyl benzoate and phenylethyl benzoate from benzoyl-CoA. With acetyl-CoA, mainly active on benzyl alcohol, and, to a lower extent, on 3-hydroxybenzyl alcohol, geraniol, and 2-phenylethanol, but barely active on butanol, 1-octanol, 4-hydroxy-benzyl alcohol, 2-hexanol, cis-3-hexen-1-ol and linalool. With benzoyl-CoA, mainly active on benzyl alcohol, but also efficient on several substrates, including 3-hydroxybenzyl alcohol, 2-phenylethanol, geraniol, butanol, cis-3-hexen-1-ol and 1-octanol. The polypeptide is Benzyl alcohol O-benzoyltransferase (Petunia hybrida (Petunia)).